Here is a 619-residue protein sequence, read N- to C-terminus: Trihelix transcription factor GTL2 (619 aa).

2 disordered regions span residues 11–41 (HRFI…VSFS) and 62–100 (HHHH…HHHH). The segment covering 16 to 27 (SPPPPPPLPPHQ) has biased composition (pro residues). The 53-residue stretch at 102–154 (PWCSDEVLALLRFRSTVENWFPEFTWEHTSRKLAEVGFKRSPQECKEKFEEEE) folds into the Myb-like 1 domain. A coiled-coil region spans residues 307–361 (VRNMIAQQEEMHKKLLEDMVKKEEEKIAREEAWKKQEIERVNKEVEIRAQEQAMA). Disordered regions lie at residues 382 to 414 (VVQN…SSLL) and 434 to 458 (STKT…DLGK). The span at 384-396 (QNPTSPSQDSSSL) shows a compositional bias: polar residues. The segment covering 435-444 (TKTLKPKNQN) has biased composition (low complexity). Positions 448 to 458 (PKSDDKSDLGK) are enriched in basic and acidic residues. Residues 459–526 (RWPKDEVLAL…RCKEKWENIN (68 aa)) form the Myb-like 2 domain. Positions 503–510 (SKKMLEIG) match the Nuclear localization signal motif. Positions 557–619 (SQPPTGTTAT…VQFSGFDLEF (63 aa)) are disordered. A compositionally biased stretch (low complexity) spans 561–574 (TGTTATTATTATSA). Over residues 575 to 585 (RDLDTRPEENR) the composition is skewed to basic and acidic residues.

The protein localises to the nucleus. Functionally, probable transcription factor that binds specific DNA sequence. The polypeptide is Trihelix transcription factor GTL2 (Arabidopsis thaliana (Mouse-ear cress)).